The chain runs to 406 residues: Purine nucleoside permease (406 aa).

The N-terminal stretch at 1-22 is a signal peptide; it reads MKLSTLFTLATTISTLTTFTIA.

Belongs to the NUP family. Post-translationally, predicted to be a substrate for cleavage by KEX2.

Mammalian nucleoside transport inhibitors dipyridamole and NBMPR inhibit adenosine transport by NUP. In terms of biological role, nucleoside permease that transports adenosine and guanosine. Does not show any transport activities towards cytidine, adenine, guanine, uridine, and uracil. This chain is Purine nucleoside permease, found in Candida albicans (strain SC5314 / ATCC MYA-2876) (Yeast).